The primary structure comprises 283 residues: Dihydropteroate synthase type-1 (283 aa).

The Pterin-binding domain maps to 6 to 262; sequence VTVFGILNLT…APGDLRSAIT (257 aa). N13 contacts Mg(2+). Residues D86, N105, D177, K216, and 250–252 contribute to the (7,8-dihydropterin-6-yl)methyl diphosphate site; that span reads RTH.

This sequence belongs to the DHPS family. In terms of assembly, homodimer or homotrimer. Mg(2+) serves as cofactor.

The enzyme catalyses (7,8-dihydropterin-6-yl)methyl diphosphate + 4-aminobenzoate = 7,8-dihydropteroate + diphosphate. The protein operates within cofactor biosynthesis; tetrahydrofolate biosynthesis; 7,8-dihydrofolate from 2-amino-4-hydroxy-6-hydroxymethyl-7,8-dihydropteridine diphosphate and 4-aminobenzoate: step 1/2. Functionally, catalyzes the condensation of para-aminobenzoate (pABA) with 6-hydroxymethyl-7,8-dihydropterin diphosphate (DHPt-PP) to form 7,8-dihydropteroate (H2Pte), the immediate precursor of folate derivatives. Implicated in resistance to sulfonamide. The polypeptide is Dihydropteroate synthase type-1 (sulI) (Mycolicibacterium fortuitum (Mycobacterium fortuitum)).